The following is a 533-amino-acid chain: AAA-ATPase At5g17740 (533 aa).

A helical membrane pass occupies residues 11-27 (ASMFSTYASMMGYVMII). 252-259 (GPPGTGKS) serves as a coordination point for ATP.

The protein belongs to the AAA ATPase family. BCS1 subfamily. Mg(2+) is required as a cofactor.

It is found in the membrane. The enzyme catalyses ATP + H2O = ADP + phosphate + H(+). This chain is AAA-ATPase At5g17740, found in Arabidopsis thaliana (Mouse-ear cress).